The sequence spans 179 residues: Guanosine-3',5'-bis(diphosphate) 3'-pyrophosphohydrolase MESH1 (179 aa).

One can recognise an HD domain in the interval 32 to 127 (YINHPLGVAR…VKLADKLYNL (96 aa)). Residues H35, H61, and D62 each coordinate Mn(2+). Residues E65 and D66 each act as nucleophile in the active site. Residue D122 participates in Mn(2+) binding.

This sequence belongs to the MESH1 family. The cofactor is Mn(2+).

The enzyme catalyses guanosine 3',5'-bis(diphosphate) + H2O = GDP + diphosphate + H(+). Its function is as follows. ppGpp hydrolyzing enzyme involved in starvation response. The chain is Guanosine-3',5'-bis(diphosphate) 3'-pyrophosphohydrolase MESH1 (hddc3) from Xenopus tropicalis (Western clawed frog).